The chain runs to 237 residues: Ribosomal RNA small subunit methyltransferase G (237 aa).

Positions 1–25 (MASRHSPQTAAQPDAADKAQALRLT) are disordered. The segment covering 7-21 (PQTAAQPDAADKAQA) has biased composition (low complexity). The S-adenosyl-L-methionine site is built by Gly85, Phe90, and Arg155.

The protein belongs to the methyltransferase superfamily. RNA methyltransferase RsmG family.

Its subcellular location is the cytoplasm. It catalyses the reaction guanosine(527) in 16S rRNA + S-adenosyl-L-methionine = N(7)-methylguanosine(527) in 16S rRNA + S-adenosyl-L-homocysteine. Specifically methylates the N7 position of guanine in position 527 of 16S rRNA. The sequence is that of Ribosomal RNA small subunit methyltransferase G from Rhodopseudomonas palustris (strain HaA2).